We begin with the raw amino-acid sequence, 225 residues long: Endonuclease V (225 aa).

Positions 43 and 110 each coordinate Mg(2+).

This sequence belongs to the endonuclease V family. Requires Mg(2+) as cofactor.

The protein resides in the cytoplasm. The enzyme catalyses Endonucleolytic cleavage at apurinic or apyrimidinic sites to products with a 5'-phosphate.. DNA repair enzyme involved in the repair of deaminated bases. Selectively cleaves double-stranded DNA at the second phosphodiester bond 3' to a deoxyinosine leaving behind the intact lesion on the nicked DNA. This is Endonuclease V from Thermotoga neapolitana (strain ATCC 49049 / DSM 4359 / NBRC 107923 / NS-E).